The following is a 206-amino-acid chain: Large ribosomal subunit protein uL3 (206 aa).

Belongs to the universal ribosomal protein uL3 family. As to quaternary structure, part of the 50S ribosomal subunit. Forms a cluster with proteins L14 and L19.

In terms of biological role, one of the primary rRNA binding proteins, it binds directly near the 3'-end of the 23S rRNA, where it nucleates assembly of the 50S subunit. The chain is Large ribosomal subunit protein uL3 from Thermus thermophilus (strain ATCC BAA-163 / DSM 7039 / HB27).